A 318-amino-acid polypeptide reads, in one-letter code: Ribosomal RNA small subunit methyltransferase H (318 aa).

Residues 38-40, Asp57, Leu91, Asp105, and Gln112 contribute to the S-adenosyl-L-methionine site; that span reads AGH.

Belongs to the methyltransferase superfamily. RsmH family.

It is found in the cytoplasm. The catalysed reaction is cytidine(1402) in 16S rRNA + S-adenosyl-L-methionine = N(4)-methylcytidine(1402) in 16S rRNA + S-adenosyl-L-homocysteine + H(+). In terms of biological role, specifically methylates the N4 position of cytidine in position 1402 (C1402) of 16S rRNA. This is Ribosomal RNA small subunit methyltransferase H from Clavibacter michiganensis subsp. michiganensis (strain NCPPB 382).